The sequence spans 107 residues: NADH-quinone oxidoreductase subunit K (107 aa).

3 consecutive transmembrane segments (helical) span residues 11–31 (LTHY…GVLL), 36–56 (IVLL…FVAF), and 67–87 (IMVF…LALA).

Belongs to the complex I subunit 4L family. In terms of assembly, NDH-1 is composed of 14 different subunits. Subunits NuoA, H, J, K, L, M, N constitute the membrane sector of the complex.

The protein resides in the cell inner membrane. The enzyme catalyses a quinone + NADH + 5 H(+)(in) = a quinol + NAD(+) + 4 H(+)(out). NDH-1 shuttles electrons from NADH, via FMN and iron-sulfur (Fe-S) centers, to quinones in the respiratory chain. The immediate electron acceptor for the enzyme in this species is believed to be ubiquinone. Couples the redox reaction to proton translocation (for every two electrons transferred, four hydrogen ions are translocated across the cytoplasmic membrane), and thus conserves the redox energy in a proton gradient. This is NADH-quinone oxidoreductase subunit K from Bdellovibrio bacteriovorus (strain ATCC 15356 / DSM 50701 / NCIMB 9529 / HD100).